We begin with the raw amino-acid sequence, 373 residues long: Pulmonary surfactant-associated protein B (373 aa).

The N-terminal stretch at 1–22 is a signal peptide; it reads MAKSHLLPWLLLLPILCGPGTA. The propeptide occupies 23-187; that stretch reads AAITYSLACA…PQTQDLSEQL (165 aa). The 41-residue stretch at 24–64 folds into the Saposin A-type domain; it reads AITYSLACAQGPEFWCQSLEQALQCRALGHCLQEVWGHVEA. 3 Saposin B-type domains span residues 64-146, 191-268, and 287-362; these read ADDL…KPRH, PIPY…SSED, and QDSD…AAPF. Cystine bridges form between C68–C142, C71–C136, C99–C111, C195–C264, C198–C258, C222–C233, C291–C358, C294–C352, and C317–C327. A glycan (N-linked (GlcNAc...) asparagine) is linked at N73. Residues 267 to 373 constitute a propeptide that is removed on maturation; that stretch reads EDSAGPALPA…PLQCVHSPHF (107 aa). N303 carries an N-linked (GlcNAc...) asparagine glycan.

Homodimer; disulfide-linked.

The protein localises to the secreted. It is found in the extracellular space. The protein resides in the surface film. In terms of biological role, pulmonary surfactant-associated proteins promote alveolar stability by lowering the surface tension at the air-liquid interface in the peripheral air spaces. SP-B increases the collapse pressure of palmitic acid to nearly 70 millinewtons per meter. The chain is Pulmonary surfactant-associated protein B (SFTPB) from Bos taurus (Bovine).